A 399-amino-acid polypeptide reads, in one-letter code: Endonuclease III homolog 1 (399 aa).

The transit peptide at 1-26 (MQKISKYSSMAILRKRPLVKTETGPE) directs the protein to the mitochondrion. The Bipartite nuclear localization signal signature appears at 14–37 (RKRPLVKTETGPESELLPEKRTKI). Residue Lys194 forms a Glycyl lysine isopeptide (Lys-Gly) (interchain with G-Cter in SUMO) linkage. The HhH domain maps to 223-247 (FSSDVPATINELLGLPGVGPKMAYL). The Nucleophile; for N-glycosylase activity role is filled by Lys243.

This sequence belongs to the Nth/MutY family. In terms of processing, monosumoylated. Sumoylation is associated with targeting of NTG1 to nuclei containing oxidative DNA damage.

The protein localises to the nucleus. The protein resides in the mitochondrion. The catalysed reaction is 2'-deoxyribonucleotide-(2'-deoxyribose 5'-phosphate)-2'-deoxyribonucleotide-DNA = a 3'-end 2'-deoxyribonucleotide-(2,3-dehydro-2,3-deoxyribose 5'-phosphate)-DNA + a 5'-end 5'-phospho-2'-deoxyribonucleoside-DNA + H(+). Functionally, bifunctional DNA N-glycosylase with associated apurinic/apyrimidinic (AP) lyase function that catalyzes the first step in base excision repair (BER), the primary repair pathway for the repair of oxidative DNA damage. The DNA N-glycosylase activity releases the damaged DNA base from DNA by cleaving the N-glycosidic bond, leaving an AP site. The AP-lyase activity cleaves the phosphodiester bond 3' to the AP site by a beta-elimination. Primarily recognizes and repairs oxidative base damage of pyrimidines, but also purine-derived lesions, alkylation damage and cytosine photoproducts generated by UV irradiation as well as abasic sites. Also has 8-oxoguanine DNA glycosylase activity. The AP lyase can incise AP sites opposite all four bases. May also play a role in the regulation of mtDNA copy number by introducing a double-stranded break (DSB) at the mtDNA replication origin ori5, initiating the rolling-circle mtDNA replication. This Saccharomyces cerevisiae (strain ATCC 204508 / S288c) (Baker's yeast) protein is Endonuclease III homolog 1.